Here is a 387-residue protein sequence, read N- to C-terminus: 1-deoxy-D-xylulose 5-phosphate reductoisomerase (387 aa).

Residues Thr-10, Gly-11, Ser-12, Ile-13, and Asn-124 each contribute to the NADPH site. A 1-deoxy-D-xylulose 5-phosphate-binding site is contributed by Lys-125. Glu-126 is a binding site for NADPH. Asp-150 lines the Mn(2+) pocket. Residues Ser-151, Glu-152, Ser-176, and His-199 each coordinate 1-deoxy-D-xylulose 5-phosphate. Glu-152 contributes to the Mn(2+) binding site. Residue Gly-205 participates in NADPH binding. 1-deoxy-D-xylulose 5-phosphate is bound by residues Ser-212, Asn-217, Lys-218, and Glu-221. Residue Glu-221 participates in Mn(2+) binding.

It belongs to the DXR family. Requires Mg(2+) as cofactor. It depends on Mn(2+) as a cofactor.

The catalysed reaction is 2-C-methyl-D-erythritol 4-phosphate + NADP(+) = 1-deoxy-D-xylulose 5-phosphate + NADPH + H(+). The protein operates within isoprenoid biosynthesis; isopentenyl diphosphate biosynthesis via DXP pathway; isopentenyl diphosphate from 1-deoxy-D-xylulose 5-phosphate: step 1/6. Catalyzes the NADPH-dependent rearrangement and reduction of 1-deoxy-D-xylulose-5-phosphate (DXP) to 2-C-methyl-D-erythritol 4-phosphate (MEP). The protein is 1-deoxy-D-xylulose 5-phosphate reductoisomerase of Clostridium beijerinckii (strain ATCC 51743 / NCIMB 8052) (Clostridium acetobutylicum).